Consider the following 456-residue polypeptide: Phytase A (456 aa).

The signal sequence occupies residues 1–24; that stretch reads MSSMASVLFAALAISGVQVTPSRG. Gln37, Tyr38, Arg68, His69, Arg72, Thr75, and Arg152 together coordinate 1D-myo-inositol hexakisphosphate. 4 cysteine pairs are disulfide-bonded: Cys58–Cys396, Cys197–Cys450, Cys246–Cys264, and Cys421–Cys429. Residue His69 is the Nucleophile of the active site. Residue Lys283 participates in 1D-myo-inositol hexakisphosphate binding. Asn317 carries an N-linked (GlcNAc...) asparagine glycan. 1D-myo-inositol hexakisphosphate is bound by residues His343 and Asp344. Asn358 carries an N-linked (GlcNAc...) asparagine glycan.

The protein belongs to the histidine acid phosphatase family. In terms of assembly, monomer.

It localises to the secreted. The enzyme catalyses 1D-myo-inositol hexakisphosphate + H2O = 1D-myo-inositol 1,2,4,5,6-pentakisphosphate + phosphate. It catalyses the reaction 1D-myo-inositol 1,2,4,5,6-pentakisphosphate + H2O = 1D-myo-inositol 1,2,5,6-tetrakisphosphate + phosphate. The catalysed reaction is 1D-myo-inositol 1,2,5,6-tetrakisphosphate + H2O = 1D-myo-inositol 1,2,6-trisphosphate + phosphate. It carries out the reaction 1D-myo-inositol 1,2,6-trisphosphate + H2O = 1D-myo-inositol 1,2-bisphosphate + phosphate. The enzyme catalyses 1D-myo-inositol 1,2-bisphosphate + H2O = 1D-myo-inositol 2-phosphate + phosphate. Its function is as follows. Catalyzes the phosphate monoester hydrolysis of phytic acid (myo-inositol hexakisphosphate), which results in the stepwise formation of myo-inositol pentakis-, tetrakis-, tris-, bis-, and monophosphates, as well as the liberation of inorganic phosphate. Myo-inositol 2-monophosphate is the end product. The protein is Phytase A of Arthroderma benhamiae (strain ATCC MYA-4681 / CBS 112371) (Trichophyton mentagrophytes).